A 149-amino-acid polypeptide reads, in one-letter code: Large ribosomal subunit protein bL9 (149 aa).

This sequence belongs to the bacterial ribosomal protein bL9 family.

Its function is as follows. Binds to the 23S rRNA. In Proteus mirabilis (strain HI4320), this protein is Large ribosomal subunit protein bL9.